Here is an 860-residue protein sequence, read N- to C-terminus: Leucine--tRNA ligase (860 aa).

A 'HIGH' region motif is present at residues P42–H52. The 'KMSKS' region motif lies at K619–S623. K622 is an ATP binding site.

This sequence belongs to the class-I aminoacyl-tRNA synthetase family.

Its subcellular location is the cytoplasm. The catalysed reaction is tRNA(Leu) + L-leucine + ATP = L-leucyl-tRNA(Leu) + AMP + diphosphate. This chain is Leucine--tRNA ligase, found in Pasteurella multocida (strain Pm70).